A 425-amino-acid polypeptide reads, in one-letter code: Arogenate dehydratase 5, chloroplastic (425 aa).

The N-terminal 38 residues, 1 to 38, are a transit peptide targeting the chloroplast; sequence MQTISPAFSCDLKSVIQPNLTAKKARYSHVNGKRVSVR. One can recognise a Prephenate dehydratase domain in the interval 127-304; that stretch reads RVAYQGVPGA…NVTRFLMLAR (178 aa). An ACT domain is found at 320-411; that stretch reads VFAAQEHKGT…SFLRVLGSYP (92 aa).

Expressed in roots, leaves, stems, flowers and siliques. More abundant in stems and roots.

It is found in the plastid. The protein localises to the chloroplast stroma. It catalyses the reaction L-arogenate + H(+) = L-phenylalanine + CO2 + H2O. The protein operates within amino-acid biosynthesis; L-phenylalanine biosynthesis; L-phenylalanine from L-arogenate: step 1/1. In terms of biological role, converts the prephenate produced from the shikimate-chorismate pathway into phenylalanine. This is Arogenate dehydratase 5, chloroplastic from Arabidopsis thaliana (Mouse-ear cress).